The sequence spans 336 residues: Holliday junction branch migration complex subunit RuvB (336 aa).

The interval 4-184 is large ATPase domain (RuvB-L); it reads ADRLISAGTT…FGIVQRLEFY (181 aa). Residues I23, R24, G65, K68, T69, T70, 131–133, R174, Y184, and R221 each bind ATP; that span reads EDY. T69 is a binding site for Mg(2+). The small ATPAse domain (RuvB-S) stretch occupies residues 185–255; that stretch reads QVPDLQYIVS…IAAQALDMLN (71 aa). The head domain (RuvB-H) stretch occupies residues 258–336; that stretch reads AEGFDYMDRK…HFGITPPEMP (79 aa). 3 residues coordinate DNA: R294, R313, and R318.

It belongs to the RuvB family. As to quaternary structure, homohexamer. Forms an RuvA(8)-RuvB(12)-Holliday junction (HJ) complex. HJ DNA is sandwiched between 2 RuvA tetramers; dsDNA enters through RuvA and exits via RuvB. An RuvB hexamer assembles on each DNA strand where it exits the tetramer. Each RuvB hexamer is contacted by two RuvA subunits (via domain III) on 2 adjacent RuvB subunits; this complex drives branch migration. In the full resolvosome a probable DNA-RuvA(4)-RuvB(12)-RuvC(2) complex forms which resolves the HJ.

It is found in the cytoplasm. The catalysed reaction is ATP + H2O = ADP + phosphate + H(+). Its function is as follows. The RuvA-RuvB-RuvC complex processes Holliday junction (HJ) DNA during genetic recombination and DNA repair, while the RuvA-RuvB complex plays an important role in the rescue of blocked DNA replication forks via replication fork reversal (RFR). RuvA specifically binds to HJ cruciform DNA, conferring on it an open structure. The RuvB hexamer acts as an ATP-dependent pump, pulling dsDNA into and through the RuvAB complex. RuvB forms 2 homohexamers on either side of HJ DNA bound by 1 or 2 RuvA tetramers; 4 subunits per hexamer contact DNA at a time. Coordinated motions by a converter formed by DNA-disengaged RuvB subunits stimulates ATP hydrolysis and nucleotide exchange. Immobilization of the converter enables RuvB to convert the ATP-contained energy into a lever motion, pulling 2 nucleotides of DNA out of the RuvA tetramer per ATP hydrolyzed, thus driving DNA branch migration. The RuvB motors rotate together with the DNA substrate, which together with the progressing nucleotide cycle form the mechanistic basis for DNA recombination by continuous HJ branch migration. Branch migration allows RuvC to scan DNA until it finds its consensus sequence, where it cleaves and resolves cruciform DNA. The polypeptide is Holliday junction branch migration complex subunit RuvB (Shigella flexneri serotype 5b (strain 8401)).